We begin with the raw amino-acid sequence, 656 residues long: Protein EMBRYO SAC DEVELOPMENT ARREST 30 (656 aa).

A helical; Signal-anchor for type II membrane protein transmembrane segment spans residues 9–29 (WIALFVLILSMGSLVVHLSMT). N-linked (GlcNAc...) asparagine glycosylation occurs at Asn-119. The disordered stretch occupies residues 381–426 (LSELVGPETPLPENTYKMPPRKSDKQLKEEWNKAGPRPRPLPPPPD). The segment covering 401 to 412 (RKSDKQLKEEWN) has biased composition (basic and acidic residues). A compositionally biased stretch (pro residues) spans 417 to 426 (RPRPLPPPPD). N-linked (GlcNAc...) asparagine glycans are attached at residues Asn-444, Asn-522, Asn-534, and Asn-544. The disordered stretch occupies residues 631–656 (SETEEEFAKSKVASAFDQDEEWDPND). Residues 647 to 656 (DQDEEWDPND) show a composition bias toward acidic residues.

Belongs to the glycosyltransferase GT106 family.

It localises to the membrane. The protein operates within glycan metabolism. The protein is Protein EMBRYO SAC DEVELOPMENT ARREST 30 of Arabidopsis thaliana (Mouse-ear cress).